A 472-amino-acid polypeptide reads, in one-letter code: Adenosylhomocysteinase (472 aa).

3 residues coordinate substrate: Thr-62, Asp-137, and Glu-197. 198–200 is a binding site for NAD(+); sequence TTT. Substrate-binding residues include Lys-227 and Asp-231. Residues Asn-232, 261–266, Glu-284, Asn-319, 340–342, and Asn-385 contribute to the NAD(+) site; these read GYGDVG and IGH.

Belongs to the adenosylhomocysteinase family. It depends on NAD(+) as a cofactor.

The protein localises to the cytoplasm. It carries out the reaction S-adenosyl-L-homocysteine + H2O = L-homocysteine + adenosine. It functions in the pathway amino-acid biosynthesis; L-homocysteine biosynthesis; L-homocysteine from S-adenosyl-L-homocysteine: step 1/1. Its function is as follows. May play a key role in the regulation of the intracellular concentration of adenosylhomocysteine. The chain is Adenosylhomocysteinase from Bordetella bronchiseptica (strain ATCC BAA-588 / NCTC 13252 / RB50) (Alcaligenes bronchisepticus).